The sequence spans 143 residues: MLQPKKTKFRRSQKGRMKGNAQRGNRLSFGSFGIKTLQAKWITGQQIEAARIAVTRCMQRQGQVWVRIFPDKPITKKPAEVRMGKGKGSPEGFVVPVTPGRILFEVEGVVFDVAKEALRLAAQKLPVTTKFIVRHDYDFNILK.

Residues 1–17 (MLQPKKTKFRRSQKGRM) show a composition bias toward basic residues. The disordered stretch occupies residues 1–25 (MLQPKKTKFRRSQKGRMKGNAQRGN).

This sequence belongs to the universal ribosomal protein uL16 family. Part of the 50S ribosomal subunit.

Its function is as follows. Binds 23S rRNA and is also seen to make contacts with the A and possibly P site tRNAs. The chain is Large ribosomal subunit protein uL16 from Azobacteroides pseudotrichonymphae genomovar. CFP2.